Reading from the N-terminus, the 373-residue chain is Tryptophan--tRNA ligase (373 aa).

A 'HIGH' region motif is present at residues 79–87 (PSGKFHFGH). A 'KMSKS' region motif is present at residues 257–261 (KMSSS).

This sequence belongs to the class-I aminoacyl-tRNA synthetase family.

It is found in the cytoplasm. It catalyses the reaction tRNA(Trp) + L-tryptophan + ATP = L-tryptophyl-tRNA(Trp) + AMP + diphosphate + H(+). The polypeptide is Tryptophan--tRNA ligase (Hyperthermus butylicus (strain DSM 5456 / JCM 9403 / PLM1-5)).